The following is a 110-amino-acid chain: Antimicrobial peptide microplusin (110 aa).

A signal peptide spans 1–20 (MKAIFVSALLVVALVASTSA). Intrachain disulfides connect Cys-26–Cys-72, Cys-39–Cys-100, and Cys-61–Cys-66.

As to expression, expressed in the hemocytes, fat body and ovaries.

It localises to the secreted. Has bacteriostatic activity against the Gram-positive bacterium M.luteus, but not against Gram-negative bacterium E.coli SBS363. Has fungistatic activity against C.neoformans, but not C.albicans. Binds and sequesters copper and iron ions. Copper-chelating is crucial for antimicrobial activity against M.luteus. This Rhipicephalus microplus (Cattle tick) protein is Antimicrobial peptide microplusin.